We begin with the raw amino-acid sequence, 396 residues long: Elongation factor Tu (396 aa).

Residues 10-206 (KPHVNVGTIG…ALDTYIPTPE (197 aa)) form the tr-type G domain. Residues 19-26 (GHVDHGKT) form a G1 region. 19–26 (GHVDHGKT) provides a ligand contact to GTP. Thr26 is a Mg(2+) binding site. Residues 60 to 64 (GITIN) are G2. Positions 81–84 (DCPG) are G3. Residues 81–85 (DCPGH) and 136–139 (NKCD) each bind GTP. Residues 136-139 (NKCD) are G4. Residues 174–176 (SAK) are G5.

The protein belongs to the TRAFAC class translation factor GTPase superfamily. Classic translation factor GTPase family. EF-Tu/EF-1A subfamily. Monomer.

Its subcellular location is the cytoplasm. The catalysed reaction is GTP + H2O = GDP + phosphate + H(+). In terms of biological role, GTP hydrolase that promotes the GTP-dependent binding of aminoacyl-tRNA to the A-site of ribosomes during protein biosynthesis. This is Elongation factor Tu from Burkholderia cepacia (Pseudomonas cepacia).